We begin with the raw amino-acid sequence, 198 residues long: Peptidyl-tRNA hydrolase (198 aa).

Residue tyrosine 18 participates in tRNA binding. Histidine 23 (proton acceptor) is an active-site residue. TRNA contacts are provided by phenylalanine 69, asparagine 71, and asparagine 117.

This sequence belongs to the PTH family. In terms of assembly, monomer.

Its subcellular location is the cytoplasm. It carries out the reaction an N-acyl-L-alpha-aminoacyl-tRNA + H2O = an N-acyl-L-amino acid + a tRNA + H(+). Hydrolyzes ribosome-free peptidyl-tRNAs (with 1 or more amino acids incorporated), which drop off the ribosome during protein synthesis, or as a result of ribosome stalling. In terms of biological role, catalyzes the release of premature peptidyl moieties from peptidyl-tRNA molecules trapped in stalled 50S ribosomal subunits, and thus maintains levels of free tRNAs and 50S ribosomes. The sequence is that of Peptidyl-tRNA hydrolase from Idiomarina loihiensis (strain ATCC BAA-735 / DSM 15497 / L2-TR).